Consider the following 947-residue polypeptide: Nonribosomal peptide synthetase ucdA (947 aa).

The segment at 25-413 (YSPHANAGYC…AGPVVFKEYF (389 aa)) is adenylation (A) domain. Residues 585-665 (APENEFERDL…DLGTALRKLQ (81 aa)) enclose the Carrier domain. At S623 the chain carries O-(pantetheine 4'-phosphoryl)serine. Residues 684 to 934 (PLWLVHPGVG…MLSPEHVFDF (251 aa)) are thioesterase (TE) domain.

It belongs to the NRP synthetase family.

It carries out the reaction 2 3-(4-hydroxyphenyl)pyruvate + 2 ATP = atromentin + 2 AMP + 2 diphosphate + H(+). It participates in secondary metabolite biosynthesis. Nonribosomal peptide synthetase that mediates the biosynthesis of usterphenyllins and uscandidusins, p-terphenyl derivatives. Within the pathway, ucdA condenses two 4-hydroxyphenylpyruvate (HPPA) units to produce atromentin. UcdA first activates HPPA through its A domain to AMP-HPPA. The HPPA unit is then loaded to the T domain and eventually transferred to the TE domain. Another HPPA unit is then loaded onto the T domain. The TE domain then catalyzes the condensation of the two HPPA units and the release of atromentin via cyclization. The pathway begin with the biosynthesis of 4-hydroxyphenylpyruvate (HPPA) from L-tyrosine, possibly by the aminotransferase ucdG. The nonribosomal peptide synthetase ucdA then condenses two HPPA units to produce atromentin. The key step in this pathway is the reduction and dehydration of atromentin to form a terphenyl triol intermediate, performed by the NAD-dependent dehydrogenase ucdB. Further O-methylation by the methyltransferase ucdC forms terphenyllin carrying two methoxy moieties at C-9 and C-12, and subsequent dihydroxylation at C-3 of ring A and C-15 of ring C by the flavin-dependent oxygenase ucdD leads to 3,15-dihydroxyterphenyllin. Prenylation by ucdE at position C-5 of ring A forms usterphenyllin B, and is followed by a second prenylation at position C-14 of ring C to form usterphenyllin A. The following furan ring formation that leads to uscandidusins A and B was proven to be an unexpected spontaneous non-enzymatic reaction. In Aspergillus ustus, this protein is Nonribosomal peptide synthetase ucdA.